The primary structure comprises 258 residues: UPF0246 protein HS_0482 (258 aa).

It belongs to the UPF0246 family.

The protein is UPF0246 protein HS_0482 of Histophilus somni (strain 129Pt) (Haemophilus somnus).